The sequence spans 195 residues: Cytochrome c oxidase assembly protein CtaG (195 aa).

Over 1–9 (MALNGPQKT) the chain is Cytoplasmic. The helical; Signal-anchor for type II membrane protein transmembrane segment at 10–30 (VVQLVGVVVLMGGLAWASVPF) threads the bilayer. Over 31 to 195 (YDWFCRVTGF…DTSGAETELN (165 aa)) the chain is Periplasmic.

Belongs to the COX11/CtaG family.

It is found in the cell inner membrane. Functionally, exerts its effect at some terminal stage of cytochrome c oxidase synthesis, probably by being involved in the insertion of the copper B into subunit I. This is Cytochrome c oxidase assembly protein CtaG from Ruegeria sp. (strain TM1040) (Silicibacter sp.).